A 260-amino-acid chain; its full sequence is Shikimate dehydrogenase (NADP(+)) (260 aa).

Shikimate is bound by residues 14 to 16 (SAS) and threonine 60. Lysine 64 functions as the Proton acceptor in the catalytic mechanism. Shikimate contacts are provided by asparagine 85 and aspartate 100. NADP(+)-binding positions include 121 to 125 (GAGGA), 145 to 150 (NRTYER), and phenylalanine 201. Shikimate is bound at residue tyrosine 203. NADP(+) is bound at residue glycine 225.

Belongs to the shikimate dehydrogenase family. Homodimer.

It catalyses the reaction shikimate + NADP(+) = 3-dehydroshikimate + NADPH + H(+). It participates in metabolic intermediate biosynthesis; chorismate biosynthesis; chorismate from D-erythrose 4-phosphate and phosphoenolpyruvate: step 4/7. Functionally, involved in the biosynthesis of the chorismate, which leads to the biosynthesis of aromatic amino acids. Catalyzes the reversible NADPH linked reduction of 3-dehydroshikimate (DHSA) to yield shikimate (SA). The protein is Shikimate dehydrogenase (NADP(+)) of Pyrobaculum islandicum (strain DSM 4184 / JCM 9189 / GEO3).